We begin with the raw amino-acid sequence, 380 residues long: MKIIADENMPNAKVLFSHLGDVELVNGRTLTHEQVREADVLLVRSVTKVTKELLEGSSVRFVGSATIGVDHIDLDYLSKANIGFSSAPGCNAEAVADYVFSALSHLYLTKKINWLSKKIGVIGYGNVGKTVYTRFANMGCQVHVYDPIREKEGGSANFVSLDEILSCDVISLHAPLTHTGSYPTKGMIGRKELAKLSAGVTIISAGRGGVIDESALFDRHKQLNGNLHLVLDVWDGEPAINQKLIAIVDIATPHIAGYSKQGREKGTWMVYQALCQYLALDANVISKHDAISAGWLSFVNVSAEEPQEEMLARSMHAIYDVSRDDIRLRFKYRENKEKNVFDWLRKHYVERDEFNTCIIGVSSSDASNLMSAAGFSVDNK.

2 residues coordinate substrate: S45 and T66. Residue D146 participates in NAD(+) binding. R207 is a catalytic residue. D232 contributes to the NAD(+) binding site. E237 is a catalytic residue. The Proton donor role is filled by H254. G257 is an NAD(+) binding site. Substrate is bound at residue Y258.

The protein belongs to the D-isomer specific 2-hydroxyacid dehydrogenase family. PdxB subfamily. Homodimer.

The protein localises to the cytoplasm. The catalysed reaction is 4-phospho-D-erythronate + NAD(+) = (R)-3-hydroxy-2-oxo-4-phosphooxybutanoate + NADH + H(+). Its pathway is cofactor biosynthesis; pyridoxine 5'-phosphate biosynthesis; pyridoxine 5'-phosphate from D-erythrose 4-phosphate: step 2/5. Catalyzes the oxidation of erythronate-4-phosphate to 3-hydroxy-2-oxo-4-phosphonooxybutanoate. This Marinomonas sp. (strain MWYL1) protein is Erythronate-4-phosphate dehydrogenase.